The following is a 459-amino-acid chain: Ribulose bisphosphate carboxylase large chain (459 aa).

Positions 1 to 2 (MS) are excised as a propeptide. Pro3 carries the post-translational modification N-acetylproline. Lys14 carries the post-translational modification N6,N6,N6-trimethyllysine. Substrate is bound by residues Xaa123 and Thr173. The active-site Proton acceptor is Lys175. Lys177 is a binding site for substrate. Lys201, Asp203, and Glu204 together coordinate Mg(2+). Lys201 carries the post-translational modification N6-carboxylysine. Residue His294 is the Proton acceptor of the active site. Substrate contacts are provided by Arg295, His327, and Ser379.

This sequence belongs to the RuBisCO large chain family. Type I subfamily. As to quaternary structure, heterohexadecamer of 8 large chains and 8 small chains; disulfide-linked. The disulfide link is formed within the large subunit homodimers. The cofactor is Mg(2+). The disulfide bond which can form in the large chain dimeric partners within the hexadecamer appears to be associated with oxidative stress and protein turnover.

Its subcellular location is the plastid. The protein resides in the chloroplast. The catalysed reaction is 2 (2R)-3-phosphoglycerate + 2 H(+) = D-ribulose 1,5-bisphosphate + CO2 + H2O. It carries out the reaction D-ribulose 1,5-bisphosphate + O2 = 2-phosphoglycolate + (2R)-3-phosphoglycerate + 2 H(+). In terms of biological role, ruBisCO catalyzes two reactions: the carboxylation of D-ribulose 1,5-bisphosphate, the primary event in carbon dioxide fixation, as well as the oxidative fragmentation of the pentose substrate in the photorespiration process. Both reactions occur simultaneously and in competition at the same active site. The chain is Ribulose bisphosphate carboxylase large chain from Corynocarpus laevigatus (New Zealand laurel).